We begin with the raw amino-acid sequence, 131 residues long: Histone H2A.2 (131 aa).

Positions 1–22 (MSGGKGKAGSSEKASTSRSAKA) are disordered. Serine 2 is modified (N-acetylserine). N6-acetyllysine occurs at positions 5 and 7. The residue at position 105 (glutamine 105) is an N5-methylglutamine. Serine 128 carries the phosphoserine modification. The [ST]-Q motif signature appears at 128–129 (SQ).

The protein belongs to the histone H2A family. The nucleosome is a histone octamer containing two molecules each of H2A, H2B, H3 and H4 assembled in one H3-H4 heterotetramer and two H2A-H2B heterodimers. The octamer wraps approximately 147 bp of DNA. Phosphorylated to form H2AS128ph (gamma-H2A) in response to DNA double-strand breaks (DSBs) generated by exogenous genotoxic agents and by stalled replication forks. Phosphorylation is dependent on the DNA damage checkpoint kinases MEC1/ATR and TEL1/ATM, spreads on either side of a detected DSB site and may mark the surrounding chromatin for recruitment of proteins required for DNA damage signaling and repair. Gamma-H2A is removed from the DNA prior to the strand invasion-primer extension step of the repair process and subsequently dephosphorylated. Dephosphorylation is necessary for efficient recovery from the DNA damage checkpoint. In terms of processing, acetylated by ESA1 to form H2AK4ac and H2AK7ac.

The protein localises to the nucleus. It is found in the chromosome. Its function is as follows. Core component of nucleosome which plays a central role in DNA double strand break (DSB) repair. Nucleosomes wrap and compact DNA into chromatin, limiting DNA accessibility to the cellular machineries which require DNA as a template. Histones thereby play a central role in transcription regulation, DNA repair, DNA replication and chromosomal stability. DNA accessibility is regulated via a complex set of post-translational modifications of histones, also called histone code, and nucleosome remodeling. In Candida albicans (strain SC5314 / ATCC MYA-2876) (Yeast), this protein is Histone H2A.2 (HTA2).